The following is a 276-amino-acid chain: Large ribosomal subunit protein uL2 (276 aa).

Over residues 28–38 the composition is skewed to basic and acidic residues; the sequence is RPEKSLTEKLS. Disordered regions lie at residues 28 to 57 and 219 to 276; these read RPEKSLTEKLSKKGGRNNQGRLTVRHQGGG and TVRG…RRKK.

This sequence belongs to the universal ribosomal protein uL2 family. As to quaternary structure, part of the 50S ribosomal subunit. Forms a bridge to the 30S subunit in the 70S ribosome.

Functionally, one of the primary rRNA binding proteins. Required for association of the 30S and 50S subunits to form the 70S ribosome, for tRNA binding and peptide bond formation. It has been suggested to have peptidyltransferase activity; this is somewhat controversial. Makes several contacts with the 16S rRNA in the 70S ribosome. The polypeptide is Large ribosomal subunit protein uL2 (Exiguobacterium sp. (strain ATCC BAA-1283 / AT1b)).